The chain runs to 100 residues: Replication restart protein PriB (100 aa).

An SSB domain is found at Thr-4–Lys-99.

It belongs to the PriB family. In terms of assembly, homodimer. Component of the replication restart primosome. Primosome assembly occurs via a 'hand-off' mechanism. PriA binds to replication forks, subsequently PriB then DnaT bind; DnaT then displaces ssDNA to generate the helicase loading substrate. Interacts with PriA with high affinity, independent of DNA presence.

PriA:PriB complex-catalyzed duplex DNA winding is inhibited by CGS 15943 (CHEBI:131351); PriA is the drug target. Stimulates the DNA unwinding activity of PriA helicase, which does not seem to require single-stranded (ss)DNA-binding by PriB. Activates DNA-dependent ATP hydrolysis catalyzed by PriA. Weakly binds ssDNA. Weakly binds double-stranded (ds)DNA, a partial duplex DNA with a 3' ssDNA overhang, and a forked DNA structure with fully duplex leading and lagging strand arms in vitro. Its function is as follows. Involved in the restart of stalled replication forks, which reloads the replicative helicase on sites other than the origin of replication; the PriA-PriB pathway is the major replication restart pathway. During primosome assembly it facilitates complex formation between PriA and DnaT on DNA; stabilizes PriA on DNA. Stimulates the DNA unwinding activity of PriA helicase. The chain is Replication restart protein PriB from Neisseria gonorrhoeae (strain ATCC 700825 / FA 1090).